The chain runs to 87 residues: LPLDVAIECLTLRESRRDIDVVRDPVEEELLKEVEVIEATKKALQQRVSQAFQQLCLLQEVRQQLCSDHRDKMESLDIDRGCLSLNL.

A coiled-coil region spans residues Val-26–Leu-55.

It belongs to the tektin family. As to quaternary structure, microtubule inner protein component of sperm flagellar doublet microtubules. May interact with CCDC172. In terms of processing, tyrosine phosphorylated. Ubiquitinated, leading to its degradation. Deubiquitinated by USP16, promoting its stability. As to expression, detected in sperm flagella (at protein level).

The protein resides in the cytoplasm. It localises to the cytoskeleton. Its subcellular location is the cilium axoneme. It is found in the flagellum axoneme. The protein localises to the microtubule organizing center. In terms of biological role, microtubule inner protein (MIP) part of the dynein-decorated doublet microtubules (DMTs) in cilia and flagellar axoneme. Plays a key role in the assembly or attachment of the inner dynein arm to microtubules in sperm flagella and tracheal cilia. Forms filamentous polymers in the walls of ciliary and flagellar microtubules. The polypeptide is Tektin-2 (Mesocricetus auratus (Golden hamster)).